The chain runs to 472 residues: Methanethiol oxidase (472 aa).

A2 bears the N-acetylalanine mark. Phosphoserine occurs at positions 111 and 467.

The protein belongs to the selenium-binding protein family. As to quaternary structure, interacts with USP33. The N-terminus is blocked. Present in liver and colon (at protein level).

It is found in the nucleus. The protein resides in the cytoplasm. The protein localises to the cytosol. Its subcellular location is the membrane. It catalyses the reaction methanethiol + O2 + H2O = hydrogen sulfide + formaldehyde + H2O2 + H(+). The protein operates within organosulfur degradation. Functionally, catalyzes the oxidation of methanethiol, an organosulfur compound known to be produced in substantial amounts by gut bacteria. Selenium-binding protein which may be involved in the sensing of reactive xenobiotics in the cytoplasm. May be involved in intra-Golgi protein transport. The chain is Methanethiol oxidase (Selenbp1) from Rattus norvegicus (Rat).